The primary structure comprises 1210 residues: Adenine-specific methyltransferase PglX (1210 aa).

Positions 1181-1194 (KQGEHGLTDDDLRG) are enriched in basic and acidic residues. The disordered stretch occupies residues 1181 to 1210 (KQGEHGLTDDDLRGWRPPAATRRRRAAAKQ). The segment covering 1201-1210 (TRRRRAAAKQ) has biased composition (basic residues).

This sequence belongs to the methyltransferase superfamily. PglX adenine methyltransferase family.

It catalyses the reaction a 2'-deoxyadenosine in DNA + S-adenosyl-L-methionine = an N(6)-methyl-2'-deoxyadenosine in DNA + S-adenosyl-L-homocysteine + H(+). Its function is as follows. BREX systems (bacteriophage exclusion) provide immunity against bacteriophage. Part of a type 2 BREX system. Probably a DNA methyltransferase, it methylates phage DNA in vitro in an S-adenosyl-L-methionine-dependent manner. Previously called the phage growth limitation (Pgl) system, it confers protection against bacteriophage phiC31. The bacteria allows one cycle of phage infection, but subsequent cycles are impaired, protecting the original bacterial colony. The system undergoes high rates (10(-3) to 10(-4)) of phase reversion, i.e. loss and regain of phiC31 resistance. When the pglW-pglX-pglY-pglZ genes are transformed into a susceptible S.lividans (strain 1326) they confer resistance to infection by phage phiC31 and phiBT1; all 4 genes are necessary. Functionally, probably a toxic component of a type II toxin-antitoxin (TA) system. The toxic activity is inhibited by its cognate antitoxin PglZ. May be a subtypes G and alpha restriction enzyme that recognizes and cleaves an unknown sequence. Methylates an adenine residue in the same sequence. This is Adenine-specific methyltransferase PglX from Streptomyces coelicolor (strain ATCC BAA-471 / A3(2) / M145).